The chain runs to 181 residues: Large ribosomal subunit protein uL5c (181 aa).

It belongs to the universal ribosomal protein uL5 family. Part of the 50S ribosomal subunit; contacts the 5S rRNA.

It is found in the plastid. The protein localises to the chloroplast. In terms of biological role, binds 5S rRNA, forms part of the central protuberance of the 50S subunit. The sequence is that of Large ribosomal subunit protein uL5c (rpl5) from Heterosigma akashiwo (strain NIES-293 / 8280G21-1).